Reading from the N-terminus, the 291-residue chain is Pyridoxal 5'-phosphate synthase subunit PdxS (291 aa).

Position 23 (aspartate 23) interacts with D-ribose 5-phosphate. Lysine 80 functions as the Schiff-base intermediate with D-ribose 5-phosphate in the catalytic mechanism. Glycine 152 is a binding site for D-ribose 5-phosphate. D-glyceraldehyde 3-phosphate is bound at residue arginine 164. D-ribose 5-phosphate-binding positions include glycine 213 and 234–235 (GS).

Belongs to the PdxS/SNZ family. As to quaternary structure, in the presence of PdxT, forms a dodecamer of heterodimers.

The catalysed reaction is aldehydo-D-ribose 5-phosphate + D-glyceraldehyde 3-phosphate + L-glutamine = pyridoxal 5'-phosphate + L-glutamate + phosphate + 3 H2O + H(+). It functions in the pathway cofactor biosynthesis; pyridoxal 5'-phosphate biosynthesis. Functionally, catalyzes the formation of pyridoxal 5'-phosphate from ribose 5-phosphate (RBP), glyceraldehyde 3-phosphate (G3P) and ammonia. The ammonia is provided by the PdxT subunit. Can also use ribulose 5-phosphate and dihydroxyacetone phosphate as substrates, resulting from enzyme-catalyzed isomerization of RBP and G3P, respectively. This chain is Pyridoxal 5'-phosphate synthase subunit PdxS, found in Methanocorpusculum labreanum (strain ATCC 43576 / DSM 4855 / Z).